The following is a 258-amino-acid chain: Imidazole glycerol phosphate synthase subunit HisF (258 aa).

Active-site residues include D11 and D130.

Belongs to the HisA/HisF family. As to quaternary structure, heterodimer of HisH and HisF.

The protein localises to the cytoplasm. It catalyses the reaction 5-[(5-phospho-1-deoxy-D-ribulos-1-ylimino)methylamino]-1-(5-phospho-beta-D-ribosyl)imidazole-4-carboxamide + L-glutamine = D-erythro-1-(imidazol-4-yl)glycerol 3-phosphate + 5-amino-1-(5-phospho-beta-D-ribosyl)imidazole-4-carboxamide + L-glutamate + H(+). It participates in amino-acid biosynthesis; L-histidine biosynthesis; L-histidine from 5-phospho-alpha-D-ribose 1-diphosphate: step 5/9. In terms of biological role, IGPS catalyzes the conversion of PRFAR and glutamine to IGP, AICAR and glutamate. The HisF subunit catalyzes the cyclization activity that produces IGP and AICAR from PRFAR using the ammonia provided by the HisH subunit. The sequence is that of Imidazole glycerol phosphate synthase subunit HisF from Shigella flexneri serotype 5b (strain 8401).